Here is a 174-residue protein sequence, read N- to C-terminus: Co-chaperone protein HscB homolog (174 aa).

The J domain occupies 2–74 (NYFELFKFSP…IRRAEHMLSL (73 aa)).

Belongs to the HscB family. Interacts with HscA and stimulates its ATPase activity.

Its function is as follows. Co-chaperone involved in the maturation of iron-sulfur cluster-containing proteins. Seems to help targeting proteins to be folded toward HscA. The sequence is that of Co-chaperone protein HscB homolog from Shewanella sp. (strain MR-4).